The following is a 379-amino-acid chain: Deoxyguanosinetriphosphate triphosphohydrolase-like protein (379 aa).

Residues 69–200 form the HD domain; sequence RLTHTIEVAQ…ANLADEIAYS (132 aa).

This sequence belongs to the dGTPase family. Type 2 subfamily.

The chain is Deoxyguanosinetriphosphate triphosphohydrolase-like protein from Azoarcus sp. (strain BH72).